The following is a 344-amino-acid chain: tRNA N6-adenosine threonylcarbamoyltransferase (344 aa).

Fe cation-binding residues include H113 and H117. Substrate contacts are provided by residues 135–139 (LVSGG), D169, G182, D186, and N278. Residue D306 coordinates Fe cation.

It belongs to the KAE1 / TsaD family. It depends on Fe(2+) as a cofactor.

Its subcellular location is the cytoplasm. The catalysed reaction is L-threonylcarbamoyladenylate + adenosine(37) in tRNA = N(6)-L-threonylcarbamoyladenosine(37) in tRNA + AMP + H(+). Required for the formation of a threonylcarbamoyl group on adenosine at position 37 (t(6)A37) in tRNAs that read codons beginning with adenine. Is involved in the transfer of the threonylcarbamoyl moiety of threonylcarbamoyl-AMP (TC-AMP) to the N6 group of A37, together with TsaE and TsaB. TsaD likely plays a direct catalytic role in this reaction. This chain is tRNA N6-adenosine threonylcarbamoyltransferase, found in Corynebacterium efficiens (strain DSM 44549 / YS-314 / AJ 12310 / JCM 11189 / NBRC 100395).